Consider the following 50-residue polypeptide: AIFVDLEPTVIDEVRSLDIERPTYTNLNRFDGAINVDVTEFQTNLVPYPR.

Asn28 serves as a coordination point for GTP. Residue Glu40 is part of the active site.

The protein belongs to the tubulin family. As to quaternary structure, dimer of alpha and beta chains. A typical microtubule is a hollow water-filled tube with an outer diameter of 25 nm and an inner diameter of 15 nM. Alpha-beta heterodimers associate head-to-tail to form protofilaments running lengthwise along the microtubule wall with the beta-tubulin subunit facing the microtubule plus end conferring a structural polarity. Microtubules usually have 13 protofilaments but different protofilament numbers can be found in some organisms and specialized cells. The cofactor is Mg(2+).

The protein localises to the cytoplasm. It localises to the cytoskeleton. It catalyses the reaction GTP + H2O = GDP + phosphate + H(+). Functionally, tubulin is the major constituent of microtubules, a cylinder consisting of laterally associated linear protofilaments composed of alpha- and beta-tubulin heterodimers. Microtubules grow by the addition of GTP-tubulin dimers to the microtubule end, where a stabilizing cap forms. Below the cap, tubulin dimers are in GDP-bound state, owing to GTPase activity of alpha-tubulin. The sequence is that of Tubulin alpha chain from Populus euphratica (Euphrates poplar).